Reading from the N-terminus, the 861-residue chain is Leucine--tRNA ligase (861 aa).

The short motif at 42–52 (PYPSGRLHMGH) is the 'HIGH' region element. A 'KMSKS' region motif is present at residues 619–623 (KMSKS). Residue Lys-622 participates in ATP binding.

This sequence belongs to the class-I aminoacyl-tRNA synthetase family.

The protein resides in the cytoplasm. The catalysed reaction is tRNA(Leu) + L-leucine + ATP = L-leucyl-tRNA(Leu) + AMP + diphosphate. This is Leucine--tRNA ligase from Haemophilus influenzae (strain 86-028NP).